A 319-amino-acid polypeptide reads, in one-letter code: HTH-type transcriptional regulator YidZ (319 aa).

The region spanning Leu8–Thr65 is the HTH lysR-type domain. Residues Val25–Ala44 constitute a DNA-binding region (H-T-H motif).

Belongs to the LysR transcriptional regulatory family.

Functionally, involved in anaerobic NO protection. This chain is HTH-type transcriptional regulator YidZ, found in Salmonella typhi.